We begin with the raw amino-acid sequence, 440 residues long: D-serine dehydratase (440 aa).

Position 116 is an N6-(pyridoxal phosphate)lysine (Lys-116).

Belongs to the serine/threonine dehydratase family. DsdA subfamily. Monomer. Requires pyridoxal 5'-phosphate as cofactor.

The catalysed reaction is D-serine = pyruvate + NH4(+). The chain is D-serine dehydratase from Salmonella typhi.